Consider the following 261-residue polypeptide: Segregation and condensation protein A (261 aa).

This sequence belongs to the ScpA family. In terms of assembly, component of a cohesin-like complex composed of ScpA, ScpB and the Smc homodimer, in which ScpA and ScpB bind to the head domain of Smc. The presence of the three proteins is required for the association of the complex with DNA.

The protein localises to the cytoplasm. In terms of biological role, participates in chromosomal partition during cell division. May act via the formation of a condensin-like complex containing Smc and ScpB that pull DNA away from mid-cell into both cell halves. The polypeptide is Segregation and condensation protein A (Leptospira interrogans serogroup Icterohaemorrhagiae serovar copenhageni (strain Fiocruz L1-130)).